The following is a 554-amino-acid chain: Potassium/proton antiporter CemA (554 aa).

A helical transmembrane segment spans residues 50–70; the sequence is SLFVVLFIPFFINIFTKIYVF. The insert stretch occupies residues 113–410; that stretch reads KTENFFPEKP…VPYNFNKNTE (298 aa). 3 helical membrane passes run 429-449, 479-499, and 514-534; these read ISAI…LFLL, MLLF…EVIF, and IIFL…KYWI.

The protein belongs to the CemA family.

It is found in the plastid. The protein resides in the chloroplast inner membrane. The catalysed reaction is K(+)(in) + H(+)(out) = K(+)(out) + H(+)(in). Functionally, contributes to K(+)/H(+) antiport activity by supporting proton efflux to control proton extrusion and homeostasis in chloroplasts in a light-dependent manner to modulate photosynthesis. Prevents excessive induction of non-photochemical quenching (NPQ) under continuous-light conditions. Indirectly promotes efficient inorganic carbon uptake into chloroplasts. The chain is Potassium/proton antiporter CemA from Stigeoclonium helveticum (Green alga).